The sequence spans 412 residues: Glucose-1-phosphate adenylyltransferase (412 aa).

Residues tyrosine 98, glycine 163, 178–179, and serine 189 each bind alpha-D-glucose 1-phosphate; that span reads EK.

It belongs to the bacterial/plant glucose-1-phosphate adenylyltransferase family. Homotetramer.

The enzyme catalyses alpha-D-glucose 1-phosphate + ATP + H(+) = ADP-alpha-D-glucose + diphosphate. The protein operates within glycan biosynthesis; glycogen biosynthesis. In terms of biological role, involved in the biosynthesis of ADP-glucose, a building block required for the elongation reactions to produce glycogen. Catalyzes the reaction between ATP and alpha-D-glucose 1-phosphate (G1P) to produce pyrophosphate and ADP-Glc. This chain is Glucose-1-phosphate adenylyltransferase, found in Thermosipho africanus (strain TCF52B).